The chain runs to 211 residues: Wound-induced protein WIN2 (211 aa).

The N-terminal stretch at 1-25 is a signal peptide; that stretch reads MVKLSCGPILLALVLCISLTSVANA. Positions 26-68 constitute a Chitin-binding type-1 domain; sequence QQCGRQRGGALCGNNLCCSQFGWCGSTPEYCSPSQGCQSQCTG. Disulfide bonds link Cys28-Cys43, Cys37-Cys49, Cys42-Cys56, and Cys62-Cys66. A Barwin domain is found at 77–198; it reads GSAQNVRATY…VNYQFVNCGD (122 aa).

This Solanum tuberosum (Potato) protein is Wound-induced protein WIN2 (WIN2).